Reading from the N-terminus, the 629-residue chain is tRNA uridine 5-carboxymethylaminomethyl modification enzyme MnmG (629 aa).

FAD contacts are provided by residues 13 to 18, Val-125, and Ser-180; that span reads GGGHAG. 273 to 287 is an NAD(+) binding site; that stretch reads GPRYCPSIEDKIHRF. Gln-370 is an FAD binding site.

The protein belongs to the MnmG family. As to quaternary structure, homodimer. Heterotetramer of two MnmE and two MnmG subunits. Requires FAD as cofactor.

The protein resides in the cytoplasm. In terms of biological role, NAD-binding protein involved in the addition of a carboxymethylaminomethyl (cmnm) group at the wobble position (U34) of certain tRNAs, forming tRNA-cmnm(5)s(2)U34. The chain is tRNA uridine 5-carboxymethylaminomethyl modification enzyme MnmG from Shewanella sp. (strain ANA-3).